Consider the following 132-residue polypeptide: Small ribosomal subunit protein uS11 (132 aa).

Positions 113 to 132 (VTPIPHDGTRAPGGKRGRRV) are disordered.

Belongs to the universal ribosomal protein uS11 family. In terms of assembly, part of the 30S ribosomal subunit.

Functionally, located on the platform of the 30S subunit. The chain is Small ribosomal subunit protein uS11 from Methanocella arvoryzae (strain DSM 22066 / NBRC 105507 / MRE50).